A 143-amino-acid chain; its full sequence is Nucleoside diphosphate kinase (143 aa).

ATP is bound by residues K11, F59, R87, T93, R104, and N114. H117 functions as the Pros-phosphohistidine intermediate in the catalytic mechanism.

It belongs to the NDK family. As to quaternary structure, homotetramer. It depends on Mg(2+) as a cofactor.

The protein resides in the cytoplasm. It catalyses the reaction a 2'-deoxyribonucleoside 5'-diphosphate + ATP = a 2'-deoxyribonucleoside 5'-triphosphate + ADP. The catalysed reaction is a ribonucleoside 5'-diphosphate + ATP = a ribonucleoside 5'-triphosphate + ADP. Functionally, major role in the synthesis of nucleoside triphosphates other than ATP. The ATP gamma phosphate is transferred to the NDP beta phosphate via a ping-pong mechanism, using a phosphorylated active-site intermediate. The chain is Nucleoside diphosphate kinase from Azotobacter vinelandii (strain DJ / ATCC BAA-1303).